Here is a 59-residue protein sequence, read N- to C-terminus: U-limacoditoxin(3)-Dv33 (59 aa).

The N-terminal stretch at 1-19 (MSKVILLCLIFALFACSIS) is a signal peptide.

It belongs to the limacoditoxin-3 family. In terms of processing, the natural peptide is not amidated. The recombinant peptide is amidated. In terms of tissue distribution, expressed by the venom secretory cell of the spine. The spine is a cuticular structure containing a single large nucleated venom-secreting cell at its base. It is an independent unit capable of producing, storing and injecting venom. On the back of D.vulnerans caterpillars, spines are grouped together by 50 to 100 to form scoli, of which there are eight in D.vulnerans.

It is found in the secreted. Functionally, probable toxin. Shows a relatively potent antiparasitic activity against the major pathogenic nematode of ruminants (H.contortus, EC(50)=2.6 uM). Does not show insecticidal and antimicrobial activities. Does not induce increase in intracellular calcium in mouse DRG neurons, suggesting that it does not induce pain. The polypeptide is U-limacoditoxin(3)-Dv33 (Doratifera vulnerans (Mottled cup moth)).